A 368-amino-acid polypeptide reads, in one-letter code: MTVTGIIAEFNPFHNGHKYLLETAEGLKIIAMSGNFMQRGEPALIDKWIRSEMALKNGADIVVELPFFVSVQSADYFAQGAIDILCQLGIQQLAFGTEDVIDYQKLIKVYEKKSKQMTAYLSTLEDTLSYPQKTQKMWEIFAGVKFSGQTPNHILGLSYAKASAGKHIQLCPIKRQGAAYHSKDKNHLLASASAIRQHLNDWDFISHSVPNAGLLINNPHMSWDHYFSFLKYQILNHSDLTSIFQVNDELASRIKKAIKVSQNIDHLVDTVATKRYTKARVRRILTYILVNAKEPTLPKGIHILGFTSKGQAHLKKLKKSRPLITRIGAETWDEMTQKADSIYQLGHQDIPEQSFGRIPIIIKNERLN.

ATP-binding positions include 7–20, Gly96, Asn152, and Arg175; that span reads IAEF…HKYL.

Belongs to the TmcAL family.

It localises to the cytoplasm. The enzyme catalyses cytidine(34) in elongator tRNA(Met) + acetate + ATP = N(4)-acetylcytidine(34) in elongator tRNA(Met) + AMP + diphosphate. Its function is as follows. Catalyzes the formation of N(4)-acetylcytidine (ac(4)C) at the wobble position of elongator tRNA(Met), using acetate and ATP as substrates. First activates an acetate ion to form acetyladenylate (Ac-AMP) and then transfers the acetyl group to tRNA to form ac(4)C34. This Streptococcus pyogenes serotype M28 (strain MGAS6180) protein is tRNA(Met) cytidine acetate ligase.